The chain runs to 417 residues: MAAEIICVGTELLLGDIVNTNAQYLALELAKLGIPHYYQTVVGDNVERLKKAIAIARERSSILIFTGGLGPTPDDLTTETIADFFQTSLREDQEILAEIEAKFTSLGREMPPSNSKQALIPMGADFLPNPTGTAPGMIWQPEANVTILTFPGVPSEMKRMWVETAIPYLESQGWGKERIYSRYLKFRGIGESALAEKVAHLFDLTNPTVAPYASLGEVRLRIATKAPSLEAALQVIEPVATEIKEIAGLDYFGADDDTLPAVVGELLRWQKQTLSVAESCTGGGLGEIITQIAGSSDYFGGGVISYDNRVKVALLDVNEGDLNNFGAVSAIVAQQMALGVQKRLATDWGISITGIAGPGGGSETKPVGLVYIGLASPEGNVTVSEHRFGENRDRLTIRQISAYTALDRLRRNLLIMS.

Belongs to the CinA family.

This chain is CinA-like protein, found in Microcystis aeruginosa (strain NIES-843 / IAM M-2473).